A 208-amino-acid polypeptide reads, in one-letter code: Uracil phosphoribosyltransferase (208 aa).

5-phospho-alpha-D-ribose 1-diphosphate-binding positions include arginine 78, arginine 103, and aspartate 130–serine 138. Residues isoleucine 193 and glycine 198–alanine 200 each bind uracil. Aspartate 199 contacts 5-phospho-alpha-D-ribose 1-diphosphate.

Belongs to the UPRTase family. It depends on Mg(2+) as a cofactor.

The enzyme catalyses UMP + diphosphate = 5-phospho-alpha-D-ribose 1-diphosphate + uracil. It functions in the pathway pyrimidine metabolism; UMP biosynthesis via salvage pathway; UMP from uracil: step 1/1. Allosterically activated by GTP. Functionally, catalyzes the conversion of uracil and 5-phospho-alpha-D-ribose 1-diphosphate (PRPP) to UMP and diphosphate. The chain is Uracil phosphoribosyltransferase from Haemophilus influenzae (strain 86-028NP).